The chain runs to 128 residues: Putative transmembrane protein 244 (128 aa).

The next 3 helical transmembrane spans lie at 17 to 37 (FLLC…MGCV), 65 to 85 (VLLV…VPVV), and 93 to 113 (AISV…EFPL).

It is found in the membrane. This is Putative transmembrane protein 244 (TMEM244) from Homo sapiens (Human).